A 444-amino-acid polypeptide reads, in one-letter code: Trigger factor (444 aa).

The region spanning 165–250 (GDFAKFDFEG…LHEIQELKIP (86 aa)) is the PPIase FKBP-type domain.

This sequence belongs to the FKBP-type PPIase family. Tig subfamily.

It is found in the cytoplasm. It catalyses the reaction [protein]-peptidylproline (omega=180) = [protein]-peptidylproline (omega=0). In terms of biological role, involved in protein export. Acts as a chaperone by maintaining the newly synthesized protein in an open conformation. Functions as a peptidyl-prolyl cis-trans isomerase. This is Trigger factor (tig) from Campylobacter jejuni subsp. jejuni serotype O:2 (strain ATCC 700819 / NCTC 11168).